Reading from the N-terminus, the 338-residue chain is Photosystem II assembly lipoprotein Ycf48 (338 aa).

The first 23 residues, 1-23 (MKKIITSFPNLLLSILLCFVLSS), serve as a signal peptide directing secretion. Cysteine 24 carries N-palmitoyl cysteine lipidation. Cysteine 24 carries S-diacylglycerol cysteine lipidation.

It belongs to the Ycf48 family. In terms of assembly, part of early PSII assembly complexes which includes D1 (psbA) and PsbI; not found in mature PSII. Binds to the lumenal side of PSII complexes. Interacts with YidC.

It is found in the cellular thylakoid membrane. A factor required for optimal assembly of photosystem II (PSII), acting in the early stages of PSII assembly. Also plays a role in replacement of photodamaged D1 (psbA). Assists YidC in synthesis of chlorophyll-binding proteins. This is Photosystem II assembly lipoprotein Ycf48 from Prochlorococcus marinus (strain MIT 9312).